Reading from the N-terminus, the 361-residue chain is MSDIERLEQEICLALEMAGDEQALEAVRIAALGKKGSISEKLKALGKMSASERQKVGPVLNGLKNRVLELWTQKRDFLRRQAMDACLTRETVDITLPVRSSPIERGRIHPISQVIEEIIAIYMKMGFSLAEGPDIETDYYNFTALNFPEGHPAREMHDTFFFDVNKTGERKLLRTHTSPVQIRTMEKQKAPIRIIIPGKTYRMDSDATHSPMFHQVEGLVIDKTSTIAHMMWLHETFCKAFFEVSSVKMRFRPSFFPFTEPSMEVDIQCDRSGSEVKFGEGQDWLEILGCGMVHPHVLKNVGLDPDEYQGFAWGMGIDRIAMLKYGMPDLRAFFDADLRWLDHYGFRCFDMHAFFPGLRNV.

E260 is a binding site for Mg(2+).

This sequence belongs to the class-II aminoacyl-tRNA synthetase family. Phe-tRNA synthetase alpha subunit type 1 subfamily. As to quaternary structure, tetramer of two alpha and two beta subunits. Mg(2+) serves as cofactor.

It is found in the cytoplasm. It catalyses the reaction tRNA(Phe) + L-phenylalanine + ATP = L-phenylalanyl-tRNA(Phe) + AMP + diphosphate + H(+). The sequence is that of Phenylalanine--tRNA ligase alpha subunit from Bartonella henselae (strain ATCC 49882 / DSM 28221 / CCUG 30454 / Houston 1) (Rochalimaea henselae).